Here is a 210-residue protein sequence, read N- to C-terminus: Pyridoxine/pyridoxamine 5'-phosphate oxidase (210 aa).

Substrate-binding positions include 7 to 10 (REDY) and Lys65. FMN is bound by residues 60 to 65 (RMVLLK), 75 to 76 (FT), Arg81, Lys82, and Gln104. Positions 122, 126, and 130 each coordinate substrate. Residues 139–140 (QS) and Trp183 each bind FMN. 189–191 (RLH) is a binding site for substrate. An FMN-binding site is contributed by Arg193.

It belongs to the pyridoxamine 5'-phosphate oxidase family. As to quaternary structure, homodimer. The cofactor is FMN.

The catalysed reaction is pyridoxamine 5'-phosphate + O2 + H2O = pyridoxal 5'-phosphate + H2O2 + NH4(+). The enzyme catalyses pyridoxine 5'-phosphate + O2 = pyridoxal 5'-phosphate + H2O2. It functions in the pathway cofactor metabolism; pyridoxal 5'-phosphate salvage; pyridoxal 5'-phosphate from pyridoxamine 5'-phosphate: step 1/1. Its pathway is cofactor metabolism; pyridoxal 5'-phosphate salvage; pyridoxal 5'-phosphate from pyridoxine 5'-phosphate: step 1/1. Its function is as follows. Catalyzes the oxidation of either pyridoxine 5'-phosphate (PNP) or pyridoxamine 5'-phosphate (PMP) into pyridoxal 5'-phosphate (PLP). The polypeptide is Pyridoxine/pyridoxamine 5'-phosphate oxidase (Neisseria meningitidis serogroup C (strain 053442)).